The sequence spans 256 residues: Flap endonuclease Xni (256 aa).

Asp-105 is a binding site for Mg(2+). One can recognise a 5'-3' exonuclease domain in the interval 163–256 (RSQLIDYLAL…QFRIKKPDSE (94 aa)). K(+) contacts are provided by Leu-172, Ala-173, Pro-181, Val-183, and Ile-186. An interaction with DNA region spans residues 185 to 190 (GIGPKS).

This sequence belongs to the Xni family. It depends on Mg(2+) as a cofactor. K(+) serves as cofactor.

Functionally, has flap endonuclease activity. During DNA replication, flap endonucleases cleave the 5'-overhanging flap structure that is generated by displacement synthesis when DNA polymerase encounters the 5'-end of a downstream Okazaki fragment. This chain is Flap endonuclease Xni, found in Shewanella pealeana (strain ATCC 700345 / ANG-SQ1).